Reading from the N-terminus, the 252-residue chain is 2-succinyl-6-hydroxy-2,4-cyclohexadiene-1-carboxylate synthase (252 aa).

It belongs to the AB hydrolase superfamily. MenH family. Monomer.

The catalysed reaction is 5-enolpyruvoyl-6-hydroxy-2-succinyl-cyclohex-3-ene-1-carboxylate = (1R,6R)-6-hydroxy-2-succinyl-cyclohexa-2,4-diene-1-carboxylate + pyruvate. The protein operates within quinol/quinone metabolism; 1,4-dihydroxy-2-naphthoate biosynthesis; 1,4-dihydroxy-2-naphthoate from chorismate: step 3/7. It functions in the pathway quinol/quinone metabolism; menaquinone biosynthesis. In terms of biological role, catalyzes a proton abstraction reaction that results in 2,5-elimination of pyruvate from 2-succinyl-5-enolpyruvyl-6-hydroxy-3-cyclohexene-1-carboxylate (SEPHCHC) and the formation of 2-succinyl-6-hydroxy-2,4-cyclohexadiene-1-carboxylate (SHCHC). The sequence is that of 2-succinyl-6-hydroxy-2,4-cyclohexadiene-1-carboxylate synthase from Escherichia fergusonii (strain ATCC 35469 / DSM 13698 / CCUG 18766 / IAM 14443 / JCM 21226 / LMG 7866 / NBRC 102419 / NCTC 12128 / CDC 0568-73).